The sequence spans 810 residues: DNA gyrase subunit A (810 aa).

The Topo IIA-type catalytic domain maps to 36–502 (LPDVRDGLKP…EVLKTSMSDL (467 aa)). Tyrosine 124 functions as the O-(5'-phospho-DNA)-tyrosine intermediate in the catalytic mechanism. A GyrA-box motif is present at residues 529 to 535 (QGIGGKG).

This sequence belongs to the type II topoisomerase GyrA/ParC subunit family. In terms of assembly, heterotetramer, composed of two GyrA and two GyrB chains. In the heterotetramer, GyrA contains the active site tyrosine that forms a transient covalent intermediate with DNA, while GyrB binds cofactors and catalyzes ATP hydrolysis.

The protein localises to the cytoplasm. The catalysed reaction is ATP-dependent breakage, passage and rejoining of double-stranded DNA.. Its function is as follows. A type II topoisomerase that negatively supercoils closed circular double-stranded (ds) DNA in an ATP-dependent manner to modulate DNA topology and maintain chromosomes in an underwound state. Negative supercoiling favors strand separation, and DNA replication, transcription, recombination and repair, all of which involve strand separation. Also able to catalyze the interconversion of other topological isomers of dsDNA rings, including catenanes and knotted rings. Type II topoisomerases break and join 2 DNA strands simultaneously in an ATP-dependent manner. The sequence is that of DNA gyrase subunit A from Borrelia hermsii (strain HS1 / DAH).